The primary structure comprises 277 residues: Large ribosomal subunit protein uL2 (277 aa).

Disordered stretches follow at residues 36 to 55 (PLPK…RHHG) and 213 to 277 (WKGI…RKKK).

The protein belongs to the universal ribosomal protein uL2 family. Part of the 50S ribosomal subunit. Forms a bridge to the 30S subunit in the 70S ribosome.

Its function is as follows. One of the primary rRNA binding proteins. Required for association of the 30S and 50S subunits to form the 70S ribosome, for tRNA binding and peptide bond formation. It has been suggested to have peptidyltransferase activity; this is somewhat controversial. Makes several contacts with the 16S rRNA in the 70S ribosome. The sequence is that of Large ribosomal subunit protein uL2 from Staphylococcus saprophyticus subsp. saprophyticus (strain ATCC 15305 / DSM 20229 / NCIMB 8711 / NCTC 7292 / S-41).